A 452-amino-acid polypeptide reads, in one-letter code: Lichenan permease IIC component (452 aa).

Residues 8–421 (LEEKVMPIAG…AVSFVVYYPF (414 aa)) form the PTS EIIC type-3 domain. A run of 10 helical transmembrane segments spans residues 31–51 (GIIL…IGNL), 72–92 (LAYP…FGIA), 104–124 (LSAG…QVPF), 138–158 (GIPL…IAMV), 187–207 (FVAL…RLIV), 218–238 (IVSV…GGSL), 246–266 (LLWA…APIW), 291–311 (FFDI…VVTM), 351–373 (LLLP…MSTG), and 402–422 (SGAV…YPFF).

It is found in the cell membrane. Its function is as follows. The phosphoenolpyruvate-dependent sugar phosphotransferase system (PTS), a major carbohydrate active -transport system, catalyzes the phosphorylation of incoming sugar substrates concomitant with their translocation across the cell membrane. This system is involved in lichenan transport. This is Lichenan permease IIC component (licC) from Bacillus subtilis (strain 168).